Consider the following 192-residue polypeptide: 7-methyl-GTP pyrophosphatase (192 aa).

The active-site Proton acceptor is the D69.

This sequence belongs to the Maf family. YceF subfamily. A divalent metal cation serves as cofactor.

It is found in the cytoplasm. It catalyses the reaction N(7)-methyl-GTP + H2O = N(7)-methyl-GMP + diphosphate + H(+). Nucleoside triphosphate pyrophosphatase that hydrolyzes 7-methyl-GTP (m(7)GTP). May have a dual role in cell division arrest and in preventing the incorporation of modified nucleotides into cellular nucleic acids. This is 7-methyl-GTP pyrophosphatase from Pseudomonas syringae pv. syringae (strain B728a).